The chain runs to 250 residues: Probable chemoreceptor glutamine deamidase CheD (250 aa).

The protein belongs to the CheD family.

The catalysed reaction is L-glutaminyl-[protein] + H2O = L-glutamyl-[protein] + NH4(+). In terms of biological role, probably deamidates glutamine residues to glutamate on methyl-accepting chemotaxis receptors (MCPs), playing an important role in chemotaxis. This Paraburkholderia xenovorans (strain LB400) protein is Probable chemoreceptor glutamine deamidase CheD.